A 191-amino-acid polypeptide reads, in one-letter code: Thiol:disulfide interchange protein TxlA (191 aa).

Residues 14 to 30 (ILVIAAALVLTILVVLG) form a helical membrane-spanning segment. The 122-residue stretch at 27 to 148 (VVLGSRQPSA…LAANLDALVE (122 aa)) folds into the Thioredoxin domain. C69 and C72 are disulfide-bonded. Positions 165 to 185 (SADLQPSRSSQTDPRSHSGQV) are enriched in polar residues. The segment at 165–191 (SADLQPSRSSQTDPRSHSGQVQDGVLD) is disordered.

It belongs to the thioredoxin family.

The protein localises to the cell membrane. Its function is as follows. Required for disulfide bond formation in some proteins. Acts by transferring its disulfide bond to other proteins and is reduced in the process. The polypeptide is Thiol:disulfide interchange protein TxlA (txlA) (Synechococcus elongatus (strain ATCC 33912 / PCC 7942 / FACHB-805) (Anacystis nidulans R2)).